Consider the following 118-residue polypeptide: MTDLIPLEQAHCLPRKGSDHKLGEARLAELLPQVPGWELAEAGMALTRTFRFADYYRTLAFVNALAWIAHREDHHPDLGVHYDRVVVRYSTHDVGGLSENDFICAAKTAQLYDQGITA.

Belongs to the pterin-4-alpha-carbinolamine dehydratase family.

The catalysed reaction is (4aS,6R)-4a-hydroxy-L-erythro-5,6,7,8-tetrahydrobiopterin = (6R)-L-erythro-6,7-dihydrobiopterin + H2O. This is Putative pterin-4-alpha-carbinolamine dehydratase (phhB) from Xanthomonas axonopodis pv. citri (strain 306).